The following is a 316-amino-acid chain: Acetaldehyde dehydrogenase (316 aa).

13 to 16 (SGNI) serves as a coordination point for NAD(+). Residue Cys-131 is the Acyl-thioester intermediate of the active site. Residues 162 to 170 (SAGPGTRAN) and Asn-290 contribute to the NAD(+) site.

This sequence belongs to the acetaldehyde dehydrogenase family.

The enzyme catalyses acetaldehyde + NAD(+) + CoA = acetyl-CoA + NADH + H(+). In terms of biological role, catalyzes the conversion of acetaldehyde to acetyl-CoA, using NAD(+) and coenzyme A. Is the final enzyme in the meta-cleavage pathway for the degradation of 2-aminophenol. This chain is Acetaldehyde dehydrogenase (amnH), found in Pseudomonas sp.